The primary structure comprises 46 residues: Mu-segestritoxin-Sf1b (46 aa).

4 disulfide bridges follow: C3/C19, C10/C22, C18/C42, and C24/C40. The interval 31 to 33 is keys region for toxin activity; sequence RPW.

Belongs to the neurotoxin 16 (SFI) family. As to expression, expressed by the venom gland.

It localises to the secreted. Functionally, insecticidal toxin. Causes flaccid paralysis followed by death when injected into Heliothis virescens larvae. Does not induce any toxic effects when injected intravenously into adult mice at a dose of 1.25 mg/kg body weight. This Segestria florentina (Tube-web spider) protein is Mu-segestritoxin-Sf1b.